Reading from the N-terminus, the 190-residue chain is Holliday junction branch migration complex subunit RuvA (190 aa).

Residues 1 to 65 (MIGNLRGIVD…ENVTQLYGFI (65 aa)) are domain I. The interval 66–143 (SKEEQQCLRL…KLEINNNHFH (78 aa)) is domain II. A flexible linker region spans residues 144 to 147 (SISE). A domain III region spans residues 147 to 190 (EDALSALINLGYERTKAYDTIKKIEDESPNLDTKDIIRMALKTI).

It belongs to the RuvA family. Homotetramer. Forms an RuvA(8)-RuvB(12)-Holliday junction (HJ) complex. HJ DNA is sandwiched between 2 RuvA tetramers; dsDNA enters through RuvA and exits via RuvB. An RuvB hexamer assembles on each DNA strand where it exits the tetramer. Each RuvB hexamer is contacted by two RuvA subunits (via domain III) on 2 adjacent RuvB subunits; this complex drives branch migration. In the full resolvosome a probable DNA-RuvA(4)-RuvB(12)-RuvC(2) complex forms which resolves the HJ.

Its subcellular location is the cytoplasm. In terms of biological role, the RuvA-RuvB-RuvC complex processes Holliday junction (HJ) DNA during genetic recombination and DNA repair, while the RuvA-RuvB complex plays an important role in the rescue of blocked DNA replication forks via replication fork reversal (RFR). RuvA specifically binds to HJ cruciform DNA, conferring on it an open structure. The RuvB hexamer acts as an ATP-dependent pump, pulling dsDNA into and through the RuvAB complex. HJ branch migration allows RuvC to scan DNA until it finds its consensus sequence, where it cleaves and resolves the cruciform DNA. The polypeptide is Holliday junction branch migration complex subunit RuvA (Wolbachia pipientis subsp. Culex pipiens (strain wPip)).